The chain runs to 514 residues: Na(+)/H(+) antiporter NhaB (514 aa).

A run of 12 helical transmembrane segments spans residues 23–43, 63–83, 97–117, 120–140, 144–164, 202–222, 238–258, 303–323, 357–377, 391–411, 447–467, and 475–495; these read LALIAFLIANPLIFFINPFVA, PLLPGGLLAIEAVIIGMTSAA, LLLMFMVAGIYFMKQLLLFIF, LLLSIRSKMLLSLAFCMAAAF, FLDALTVVAVVISVAVGFYGI, LMMHAGVGTALGGVMTMVGEP, FFLRMSPVTVPVLICGLFTCV, AIIGVWLVTALALHLAEVGLI, LTVFFSIVAVIIDQHLFAPII, LFYLFNGLLSSISDNVFVGTI, ATPNGQAAFLFLLTSALAPLI, and VWMALPYTLVLTLVGLLCVEF.

Belongs to the NhaB Na(+)/H(+) (TC 2.A.34) antiporter family.

The protein localises to the cell inner membrane. It carries out the reaction 2 Na(+)(in) + 3 H(+)(out) = 2 Na(+)(out) + 3 H(+)(in). Na(+)/H(+) antiporter that extrudes sodium in exchange for external protons. This is Na(+)/H(+) antiporter NhaB from Citrobacter koseri (strain ATCC BAA-895 / CDC 4225-83 / SGSC4696).